The chain runs to 388 residues: (S)-8-oxocitronellyl enol synthase ISY1 (388 aa).

Residues 35–37, 63–64, 81–82, 105–106, and Gln143 contribute to the NADP(+) site; these read TGI, RR, DV, and TW. Active-site residues include Lys147 and Tyr178. NADP(+) is bound by residues Tyr178, Ile205, and 212–214; that span reads SMM.

Belongs to the short-chain dehydrogenases/reductases (SDR) family.

The catalysed reaction is (S)-8-oxocitronellyl enol + NADP(+) = (6E)-8-oxogeranial + NADPH + H(+). It carries out the reaction (S)-8-oxocitronellyl enol + NAD(+) = (6E)-8-oxogeranial + NADH + H(+). In terms of biological role, iridoid synthase that catalyzes the first step in generation of the iridoid ring scaffold using the linear monoterpene (6E)-8-oxogeranial as substrate. Iridoids comprise a large family of distinctive bicyclic monoterpenes that possess a wide range of pharmacological activities, including anticancer, anti-inflammatory, antifungal and antibacterial activities. Catalyzes the conversion of the linear monoterpene (6E)-8-oxogeranial to (S)-8-oxocitronellyl enol, a precursor of nepetalactones, which are metabolites that are both insect-repellent and have euphoric effect in cats. This chain is (S)-8-oxocitronellyl enol synthase ISY1, found in Nepeta cataria (Catnip).